We begin with the raw amino-acid sequence, 205 residues long: Mitotic spindle assembly checkpoint protein MAD2A (205 aa).

Ala-2 carries the post-translational modification N-acetylalanine. The 184-residue stretch at 14 to 197 (RGSAEIVAEF…TTIHKVNSMV (184 aa)) folds into the HORMA domain. 4 positions are modified to phosphoserine: Ser-130, Ser-170, Ser-185, and Ser-195. Residues 195 to 205 (SMVAYKTPVND) are required for assuming the closed conformation and for interaction with CDC20.

Belongs to the MAD2 family. As to quaternary structure, monomer and homodimer. Heterodimerizes with MAD2L1 in order to form a tetrameric MAD1L1-MAD2L1 core complex. In the closed and open conformation, interacts with MAD1L1. Formation of a heterotetrameric core complex containing two molecules each of MAD1L1 and of MAD2L1 promotes binding of another molecule of MAD2L1 to each MAD2L1, resulting in a heterohexamer. Interacts with MAD2L1BP. Interacts with ADAM17/TACE. Interacts with CDC20. Dimeric MAD2L1 in the closed conformation interacts with CDC20. Monomeric MAD2L1 in the open conformation does not interact with CDC20. CDC20 competes with MAD1L1 for MAD2L1 binding. In the closed conformation, interacts with BUB1B. Interacts with TTK. Interacts with TPR. Binds to UBD (via ubiquitin-like 1 domain) during mitosis. Interacts with isoform 1 and isoform 2 of NEK2. Interacts with HSF1; this interaction occurs in mitosis. In terms of processing, phosphorylated on multiple serine residues. The level of phosphorylation varies during the cell cycle and is highest during mitosis. Phosphorylation abolishes interaction with MAD1L1 and reduces interaction with CDC20. Phosphorylated by NEK2.

The protein localises to the nucleus. Its subcellular location is the chromosome. It localises to the centromere. The protein resides in the kinetochore. It is found in the cytoplasm. The protein localises to the cytoskeleton. Its subcellular location is the spindle pole. In terms of biological role, component of the spindle-assembly checkpoint that prevents the onset of anaphase until all chromosomes are properly aligned at the metaphase plate. In the closed conformation (C-MAD2) forms a heterotetrameric complex with MAD1L1 at unattached kinetochores during prometaphase, and recruits an open conformation of MAD2L1 (O-MAD2) which then promotes the conversion of O-MAD2 to C-MAD2. Required for the execution of the mitotic checkpoint which monitors the process of kinetochore-spindle attachment and inhibits the activity of the anaphase promoting complex by sequestering CDC20 until all chromosomes are aligned at the metaphase plate. This is Mitotic spindle assembly checkpoint protein MAD2A (Mad2l1) from Mus musculus (Mouse).